The primary structure comprises 588 residues: Proline--tRNA ligase (588 aa).

It belongs to the class-II aminoacyl-tRNA synthetase family. ProS type 1 subfamily. As to quaternary structure, homodimer.

Its subcellular location is the cytoplasm. The enzyme catalyses tRNA(Pro) + L-proline + ATP = L-prolyl-tRNA(Pro) + AMP + diphosphate. Catalyzes the attachment of proline to tRNA(Pro) in a two-step reaction: proline is first activated by ATP to form Pro-AMP and then transferred to the acceptor end of tRNA(Pro). As ProRS can inadvertently accommodate and process non-cognate amino acids such as alanine and cysteine, to avoid such errors it has two additional distinct editing activities against alanine. One activity is designated as 'pretransfer' editing and involves the tRNA(Pro)-independent hydrolysis of activated Ala-AMP. The other activity is designated 'posttransfer' editing and involves deacylation of mischarged Ala-tRNA(Pro). The misacylated Cys-tRNA(Pro) is not edited by ProRS. The protein is Proline--tRNA ligase of Helicobacter hepaticus (strain ATCC 51449 / 3B1).